Here is a 172-residue protein sequence, read N- to C-terminus: Protein GrpE (172 aa).

This sequence belongs to the GrpE family. As to quaternary structure, homodimer.

The protein resides in the cytoplasm. In terms of biological role, participates actively in the response to hyperosmotic and heat shock by preventing the aggregation of stress-denatured proteins, in association with DnaK and GrpE. It is the nucleotide exchange factor for DnaK and may function as a thermosensor. Unfolded proteins bind initially to DnaJ; upon interaction with the DnaJ-bound protein, DnaK hydrolyzes its bound ATP, resulting in the formation of a stable complex. GrpE releases ADP from DnaK; ATP binding to DnaK triggers the release of the substrate protein, thus completing the reaction cycle. Several rounds of ATP-dependent interactions between DnaJ, DnaK and GrpE are required for fully efficient folding. The sequence is that of Protein GrpE from Thermotoga petrophila (strain ATCC BAA-488 / DSM 13995 / JCM 10881 / RKU-1).